The primary structure comprises 604 residues: Afamin (604 aa).

The signal sequence occupies residues Met1–Thr21. Albumin domains follow at residues Leu22–Ile210, Tyr211–Glu403, and Thr404–Ala598. 17 disulfide bridges follow: Cys77/Cys86, Cys99/Cys114, Cys113/Cys124, Cys148/Cys193, Cys192/Cys201, Cys224/Cys270, Cys269/Cys277, Cys289/Cys303, Cys302/Cys313, Cys340/Cys385, Cys384/Cys393, Cys416/Cys462, Cys461/Cys470, Cys483/Cys499, Cys498/Cys509, Cys536/Cys581, and Cys580/Cys589. Asn109 carries an N-linked (GlcNAc...) asparagine glycan. The interval Ala215–Lys319 is binding pocket for hydrophobic ligands. Asn434 carries N-linked (GlcNAc...) asparagine glycosylation.

Belongs to the ALB/AFP/VDB family. Forms a 1:1 complex with Wnt family members; interacts with WNT3A and WNT5A. Interacts with WNT1, WNT2B, WNT3, WNT7A, WNT7B, WNT8, WNT9A, WNT9B, WNT10A and WNT10B. In terms of processing, N-glycosylated; more than 90% of the glycans are sialylated.

The protein resides in the secreted. Functions as a carrier for hydrophobic molecules in body fluids. Essential for the solubility and activity of lipidated Wnt family members, including WNT1, WNT2B, WNT3, WNT3A, WNT5A, WNT7A, WNT7B, WNT8, WNT9A, WNT9B, WNT10A and WNT10B. Binds vitamin E. May transport vitamin E in body fluids under conditions where the lipoprotein system is not sufficient. May be involved in the transport of vitamin E across the blood-brain barrier. The chain is Afamin (AFM) from Bos taurus (Bovine).